A 398-amino-acid polypeptide reads, in one-letter code: Queuine tRNA-ribosyltransferase (398 aa).

Asp102 (proton acceptor) is an active-site residue. Residues Asp102–Phe106, Asp156, Gln205, and Gly232 contribute to the substrate site. The segment at Gly263–Asp269 is RNA binding. Asp282 functions as the Nucleophile in the catalytic mechanism. Positions Thr287–Arg291 are RNA binding; important for wobble base 34 recognition. Positions 320, 322, 325, and 362 each coordinate Zn(2+).

This sequence belongs to the queuine tRNA-ribosyltransferase family. Homodimer. Within each dimer, one monomer is responsible for RNA recognition and catalysis, while the other monomer binds to the replacement base PreQ1. It depends on Zn(2+) as a cofactor.

The enzyme catalyses 7-aminomethyl-7-carbaguanine + guanosine(34) in tRNA = 7-aminomethyl-7-carbaguanosine(34) in tRNA + guanine. The protein operates within tRNA modification; tRNA-queuosine biosynthesis. Catalyzes the base-exchange of a guanine (G) residue with the queuine precursor 7-aminomethyl-7-deazaguanine (PreQ1) at position 34 (anticodon wobble position) in tRNAs with GU(N) anticodons (tRNA-Asp, -Asn, -His and -Tyr). Catalysis occurs through a double-displacement mechanism. The nucleophile active site attacks the C1' of nucleotide 34 to detach the guanine base from the RNA, forming a covalent enzyme-RNA intermediate. The proton acceptor active site deprotonates the incoming PreQ1, allowing a nucleophilic attack on the C1' of the ribose to form the product. After dissociation, two additional enzymatic reactions on the tRNA convert PreQ1 to queuine (Q), resulting in the hypermodified nucleoside queuosine (7-(((4,5-cis-dihydroxy-2-cyclopenten-1-yl)amino)methyl)-7-deazaguanosine). This is Queuine tRNA-ribosyltransferase from Polaromonas sp. (strain JS666 / ATCC BAA-500).